We begin with the raw amino-acid sequence, 269 residues long: 4-hydroxy-4-methyl-2-oxoglutarate aldolase cghB (269 aa).

The active-site Proton acceptor is His48. A divalent metal cation-binding residues include Glu155 and Asp181. Asp181 is a binding site for substrate.

It belongs to the HpcH/HpaI aldolase family. As to quaternary structure, homohexamer; trimer of dimers. The cofactor is Co(2+). Mn(2+) is required as a cofactor. It depends on Zn(2+) as a cofactor. Fe(2+) serves as cofactor. Requires Mg(2+) as cofactor.

It catalyses the reaction 4-hydroxy-4-methyl-2-oxoglutarate = 2 pyruvate. It participates in secondary metabolite biosynthesis. Functionally, 4-hydroxy-4-methyl-2-oxoglutarate aldolase; part of the gene cluster that mediates the biosynthesis of the tetramic acid Sch210972, a potential anti-HIV fungal natural product that contains a decalin core. The PKS module of cghG together with the enoylreductase cghC catalyze the formation of the polyketide unit which is then conjugated to 4-hydroxyl-4-methyl glutamate (HMG) by the condensation domain of the cghG NRPS module. One unique structural feature of Sch210972 is the tetramic acid motif proposed to be derived from the non-proteinogenic amino acid HMG, by a Dieckmann-type condensation catalyzed by the reductase domain of cghG. The aldolase cghB catalyzes the aldol condensation of 2 molecules of pyruvic acid to yield the intermediate 4-hydroxyl-4-methyl-2-oxoglutarate (HMOG), which can then be stereoselectively transaminated by an unidentified enzyme to form HMG. The Diels-Alderase cghA then uses the Dieckmann product released by cghG as substrate and catalyzes the Diels-Alder cycloaddition to form the decalin ring of Sch210972. CghA also suppresses the nonenzymatic formation of the alternative stereoisomer. This Chaetomium globosum (strain ATCC 6205 / CBS 148.51 / DSM 1962 / NBRC 6347 / NRRL 1970) (Soil fungus) protein is 4-hydroxy-4-methyl-2-oxoglutarate aldolase cghB.